A 285-amino-acid polypeptide reads, in one-letter code: UstYa family oxidase phomYe (285 aa).

Residues 32–54 (LFYGWKGIAFLSTLTNVLFISGF) form a helical membrane-spanning segment. The segment at 143–165 (YGFGTPLTGPGSEGNEHDPTPWT) is disordered. Residues 177-181 (HQLHC) carry the HXXHC 1 motif. N-linked (GlcNAc...) asparagine glycosylation occurs at Asn202. Residues 209-213 (HVDHC) carry the HXXHC 2 motif.

It belongs to the ustYa family.

The protein localises to the membrane. It functions in the pathway mycotoxin biosynthesis. Functionally, ustYa family oxidase; part of the gene cluster that mediates the biosynthesis of the phomopsins, a group of hexapeptide mycotoxins which infects lupins and causes lupinosis disease in livestock. Within the pathway, phomYe catalyzes the desaturation of the Pro moiety into 3,4-dehydroproline (dPro). The pathway starts with the processing of the precursor phomA by several endopeptidases including kexin proteases as well as the cluster-specific S41 family peptidase phomP1 and the oligopeptidase phomG to produce 10 identical copies of the hexapeptide Tyr-Val-Ile-Pro-Ile-Asp. After being excised from the precursor peptide, the core peptides are cyclized and modified post-translationally by enzymes encoded within the gene cluster. The timing and order of proteolysis of the phomA precursor and PTMs are still unknown. Two tyrosinase-like enzymes, phomQ1 and phomQ2, catalyze the chlorination and hydroxylation of Tyr, respectively. PhomYb, is proposed to be involved in the construction of the macrocyclic structure. The other 4 ustYa family proteins may be involved in PTMs that generate the unique structure of phomopsin A. PhomYa is required for the hydroxylation of C-beta of Tyr. PhomYc, phomYd, and phomYe are responsible for the biosynthesis of 2,3-dehydroisoleucine (dIle), 2,3-dehydroaspartic acid (dAsp), and 3,4-dehydroproline (dPro), respectively. While dIle formation by phomYc is indispensable for the installation of dAsp by phomYd, the order of the other PTMs have not been elucidated yet. Most of the biosynthetic enzymes likely have broad substrate specificity, and thus, there might be a metabolic grid from a precursor to phomopsin A. The enzyme(s) responsible for the biosynthesis of 3,4-dehydrovaline (dVal) have also not been identified yet. Finally, phomM acts as an S-adenosylmethionine-dependent alpha-N-methyltransferase that catalyzes two successive N-methylation reactions, converting N-desmethyl-phomopsin A to phomopsin A and phomopsin A further to an N,N-dimethylated congener called phomopsin E. The polypeptide is UstYa family oxidase phomYe (Diaporthe leptostromiformis (Lupinosis disease fungus)).